The primary structure comprises 149 residues: Calmodulin (149 aa).

At Ala-2 the chain carries N-acetylalanine. EF-hand domains follow at residues 8 to 43 (EQISEFKEAFSLFDKDGDGTITTKELGTVMRSLGQN), 44 to 79 (PTEAELQDMINEIDTDGNGTIDFPEFLTLMARKLKD), 81 to 116 (DTEEELIEAFRVFDRDGDGYISADELRHVMTNLGEK), and 117 to 149 (LTNEEVDEMIREADIDGDGQINYEEFVKMMIAK). Asp-21, Asp-23, Asp-25, Thr-27, Glu-32, Asp-57, Asp-59, Asn-61, Thr-63, Glu-68, Asp-94, Asp-96, Asp-98, Tyr-100, Glu-105, Asp-130, Asp-132, Asp-134, Gln-136, and Glu-141 together coordinate Ca(2+).

It belongs to the calmodulin family.

The protein resides in the cytoplasm. Its function is as follows. Calmodulin mediates the control of a large number of enzymes, ion channels and other proteins by Ca(2+). Among the enzymes to be stimulated by the calmodulin-Ca(2+) complex are a number of protein kinases and phosphatases. The chain is Calmodulin from Plasmodium falciparum (isolate 3D7).